The chain runs to 82 residues: DNA-directed RNA polymerase subunit Rpo5 (82 aa).

This sequence belongs to the archaeal Rpo5/eukaryotic RPB5 RNA polymerase subunit family. In terms of assembly, part of the RNA polymerase complex.

The protein resides in the cytoplasm. It catalyses the reaction RNA(n) + a ribonucleoside 5'-triphosphate = RNA(n+1) + diphosphate. Its function is as follows. DNA-dependent RNA polymerase (RNAP) catalyzes the transcription of DNA into RNA using the four ribonucleoside triphosphates as substrates. The sequence is that of DNA-directed RNA polymerase subunit Rpo5 from Thermococcus celer.